The chain runs to 293 residues: Elongation factor Ts (293 aa).

Residues 80 to 83 form an involved in Mg(2+) ion dislocation from EF-Tu region; it reads TDFV.

This sequence belongs to the EF-Ts family.

It localises to the cytoplasm. Its function is as follows. Associates with the EF-Tu.GDP complex and induces the exchange of GDP to GTP. It remains bound to the aminoacyl-tRNA.EF-Tu.GTP complex up to the GTP hydrolysis stage on the ribosome. This Janthinobacterium sp. (strain Marseille) (Minibacterium massiliensis) protein is Elongation factor Ts.